The chain runs to 481 residues: Glutamyl-tRNA(Gln) amidotransferase subunit A (481 aa).

Residues K76 and S151 each act as charge relay system in the active site. S175 serves as the catalytic Acyl-ester intermediate.

The protein belongs to the amidase family. GatA subfamily. In terms of assembly, heterotrimer of A, B and C subunits.

It catalyses the reaction L-glutamyl-tRNA(Gln) + L-glutamine + ATP + H2O = L-glutaminyl-tRNA(Gln) + L-glutamate + ADP + phosphate + H(+). Functionally, allows the formation of correctly charged Gln-tRNA(Gln) through the transamidation of misacylated Glu-tRNA(Gln) in organisms which lack glutaminyl-tRNA synthetase. The reaction takes place in the presence of glutamine and ATP through an activated gamma-phospho-Glu-tRNA(Gln). In Neisseria meningitidis serogroup A / serotype 4A (strain DSM 15465 / Z2491), this protein is Glutamyl-tRNA(Gln) amidotransferase subunit A.